Here is a 445-residue protein sequence, read N- to C-terminus: Methyl-CpG-binding domain protein 4-like protein (445 aa).

Asp429 is an active-site residue.

As to expression, isoform 1 and isoform 4: Expressed in leaves and flowers, but not in roots or stems.

The protein localises to the nucleus. In terms of biological role, monofunctional DNA glycosylase targeting U:G and T:G mispairs. Excises uracil derivatives and exhibits a preference for a CpG sequence context, irrespective of the methylation status of the complementary strand. The activity follows a biphasic kinetics, with an initial burst of product accumulation followed by a slower phase. Specifically binds its reaction product. Triggers the base excision repair (BER) pathway. This chain is Methyl-CpG-binding domain protein 4-like protein, found in Arabidopsis thaliana (Mouse-ear cress).